Here is a 483-residue protein sequence, read N- to C-terminus: Isocitrate dehydrogenase [NADP] (483 aa).

Position 74 (threonine 74) interacts with NADP(+). Positions 83, 85, 89, 99, and 121 each coordinate D-threo-isocitrate. Aspartate 232 lines the Mg(2+) pocket. Residues 264–270 (HGSAPDI) and asparagine 277 each bind NADP(+).

This sequence belongs to the isocitrate and isopropylmalate dehydrogenases family. Homodimer. Requires Mg(2+) as cofactor. It depends on Mn(2+) as a cofactor.

The catalysed reaction is D-threo-isocitrate + NADP(+) = 2-oxoglutarate + CO2 + NADPH. Its function is as follows. Catalyzes the oxidative decarboxylation of isocitrate to 2-oxoglutarate and carbon dioxide with the concomitant reduction of NADP(+). The chain is Isocitrate dehydrogenase [NADP] (icd) from Rickettsia typhi (strain ATCC VR-144 / Wilmington).